We begin with the raw amino-acid sequence, 116 residues long: Staphylococcal complement inhibitor (116 aa).

Residues 1–31 (MKIRKSILAGTLAIVLASPLVTNLDKNEAQA) form the signal peptide. The essential for activity stretch occupies residues 62–79 (LATGSLNTYYKRTIKISG).

It belongs to the SCIN family.

Its subcellular location is the secreted. In terms of biological role, involved in countering the first line of host defense mechanisms. Efficiently inhibits opsonization, phagocytosis and killing of S.aureus by human neutrophils. Acts by binding and stabilizing human C3 convertases (C4b2a and C3bBb), leading to their inactivation. The convertases are no longer able to cleave complement C3, therefore preventing further C3b deposition on the bacterial surface and phagocytosis of the bacterium. Also prevents C5a-induced neutrophil responses. This Staphylococcus aureus (strain N315) protein is Staphylococcal complement inhibitor (scn).